The sequence spans 123 residues: Ribosome-binding factor A (123 aa).

Belongs to the RbfA family. As to quaternary structure, monomer. Binds 30S ribosomal subunits, but not 50S ribosomal subunits or 70S ribosomes.

It is found in the cytoplasm. In terms of biological role, one of several proteins that assist in the late maturation steps of the functional core of the 30S ribosomal subunit. Associates with free 30S ribosomal subunits (but not with 30S subunits that are part of 70S ribosomes or polysomes). Required for efficient processing of 16S rRNA. May interact with the 5'-terminal helix region of 16S rRNA. The polypeptide is Ribosome-binding factor A (Ralstonia nicotianae (strain ATCC BAA-1114 / GMI1000) (Ralstonia solanacearum)).